Here is a 235-residue protein sequence, read N- to C-terminus: UPF0749 protein YlxX (235 aa).

Residues 6–26 (SFISISVLMVIFGLMISVQFN) traverse the membrane as a helical segment.

Belongs to the UPF0749 family.

It localises to the cell membrane. The protein is UPF0749 protein YlxX (ylxX) of Bacillus subtilis (strain 168).